The primary structure comprises 999 residues: Sarcoplasmic/endoplasmic reticulum calcium ATPase 3 (999 aa).

At Met1 the chain carries N-acetylmethionine. Residues 1–48 (MEEAHLLSAADVLRRFSVTAEGGLTLEQVTDARERYGPNELPTEEGKS) lie on the Cytoplasmic side of the membrane. Ser17 bears the Phosphoserine mark. Thr19 is modified (phosphothreonine). A helical membrane pass occupies residues 49–69 (LWELVVEQFEDLLVRILLLAA). Over 70-89 (LVSFVLAWFEEGEETTTAFV) the chain is Lumenal. A helical transmembrane segment spans residues 90–110 (EPLVIMLILVANAIVGVWQER). Over 111-253 (NAESAIEALK…PERTPLQRKL (143 aa)) the chain is Cytoplasmic. The helical transmembrane segment at 254-273 (DEFGRQLSHAISVICVAVWV) threads the bilayer. Residues 274 to 295 (INIGHFADPAHGGSWLRGAVYY) are Lumenal-facing. Residues 296–313 (FKIAVALAVAAIPEGLPA) traverse the membrane as a helical segment. Val304, Ala305, Ile307, and Glu309 together coordinate Ca(2+). Topologically, residues 314-757 (VITTCLALGT…EEGRAIYNNM (444 aa)) are cytoplasmic. The 4-aspartylphosphate intermediate role is filled by Asp351. Residues Asp351 and Thr353 each coordinate Mg(2+). Thr353 lines the ATP pocket. Residues 370–400 (AEAEAGACRLHEFTISGTTYTPEGEVRQGEQ) are interaction with phospholamban 1. Thr415 is subject to Phosphothreonine. Residues Glu442, Arg489, Lys515, Arg560, Thr625, Gly626, and Asp627 each coordinate ATP. At Ser662 the chain carries Phosphoserine. Residues Arg678 and Lys684 each contribute to the ATP site. Residue Asp703 coordinates Mg(2+). Asn706 lines the ATP pocket. A helical membrane pass occupies residues 758-777 (KQFIRYLISSNVGEVVCIFL). The Ca(2+) site is built by Asn768 and Glu771. Residues 778-787 (TAILGLPEAL) lie on the Lumenal side of the membrane. A helical membrane pass occupies residues 788–808 (IPVQLLWVNLVTDGLPATALG). The segment at 788-808 (IPVQLLWVNLVTDGLPATALG) is interaction with phospholamban 2. Ca(2+)-binding residues include Asn796, Thr799, and Asp800. Topologically, residues 809–828 (FNPPDLDIMEKLPRNPREAL) are cytoplasmic. The helical transmembrane segment at 829-851 (ISGWLFFRYLAIGVYVGLATVAA) threads the bilayer. At 852-897 (ATWWFLYDAEGPQVTFHQLRNFLKCSEDNPLFAGIDCEVFESRFPT) the chain is on the lumenal side. A helical transmembrane segment spans residues 898 to 917 (TMALSVLVTIEMCNALNSVS). A Ca(2+)-binding site is contributed by Glu908. Topologically, residues 918-930 (ENQSLLRMPPWLN) are cytoplasmic. A helical transmembrane segment spans residues 931-949 (PWLLGAVVMSMALHFLILL). Residues 950 to 964 (VPPLPLIFQVTPLSG) lie on the Lumenal side of the membrane. Residues 965 to 985 (RQWGVVLQMSLPVILLDEALK) form a helical membrane-spanning segment. Topologically, residues 986-999 (YLSRHHVDEKKDLK) are cytoplasmic.

It belongs to the cation transport ATPase (P-type) (TC 3.A.3) family. Type IIA subfamily. In terms of assembly, interacts with sarcolipin (SLN). Interacts with phospholamban (PLN). Interacts with myoregulin (MRLN). Interacts with DWORF. Interacts with VMP1. Interacts with TUNAR; the interaction occurs at low levels in low glucose conditions and is increased by high glucose levels. Requires Mg(2+) as cofactor. Found in most tissues. Most abundant in large and small intestine, spleen and lung. Also detected in PC12 cells.

The protein resides in the endoplasmic reticulum membrane. It is found in the sarcoplasmic reticulum membrane. The catalysed reaction is Ca(2+)(in) + ATP + H2O = Ca(2+)(out) + ADP + phosphate + H(+). Inhibited by sarcolipin (SLN), phospholamban (PLN) and myoregulin (MRLN). Enhanced by DWORF; DWORF increases activity by displacing sarcolipin (SLN), phospholamban (PLN) and myoregulin (MRLN). Its function is as follows. This magnesium-dependent enzyme catalyzes the hydrolysis of ATP coupled with the transport of the calcium. Transports calcium ions from the cytosol into the sarcoplasmic/endoplasmic reticulum lumen. Contributes to calcium sequestration involved in muscular excitation/contraction. In terms of biological role, this magnesium-dependent enzyme catalyzes the hydrolysis of ATP coupled with the transport of calcium. Transports calcium ions from the cytosol into the sarcoplasmic/endoplasmic reticulum lumen. Contributes to calcium sequestration involved in muscular excitation/contraction. In Rattus norvegicus (Rat), this protein is Sarcoplasmic/endoplasmic reticulum calcium ATPase 3 (Atp2a3).